Here is a 1252-residue protein sequence, read N- to C-terminus: DNA-directed RNA polymerase subunit beta (1252 aa).

It belongs to the RNA polymerase beta chain family. The RNAP catalytic core consists of 2 alpha, 1 beta, 1 beta' and 1 omega subunit. When a sigma factor is associated with the core the holoenzyme is formed, which can initiate transcription.

It catalyses the reaction RNA(n) + a ribonucleoside 5'-triphosphate = RNA(n+1) + diphosphate. Functionally, DNA-dependent RNA polymerase catalyzes the transcription of DNA into RNA using the four ribonucleoside triphosphates as substrates. The polypeptide is DNA-directed RNA polymerase subunit beta (Chlamydia felis (strain Fe/C-56) (Chlamydophila felis)).